A 122-amino-acid chain; its full sequence is Large ribosomal subunit protein uL14 (122 aa).

It belongs to the universal ribosomal protein uL14 family. In terms of assembly, part of the 50S ribosomal subunit. Forms a cluster with proteins L3 and L19. In the 70S ribosome, L14 and L19 interact and together make contacts with the 16S rRNA in bridges B5 and B8.

Binds to 23S rRNA. Forms part of two intersubunit bridges in the 70S ribosome. The polypeptide is Large ribosomal subunit protein uL14 (Rippkaea orientalis (strain PCC 8801 / RF-1) (Cyanothece sp. (strain PCC 8801))).